A 170-amino-acid chain; its full sequence is Photosystem I assembly protein Ycf3 (170 aa).

TPR repeat units follow at residues 35–68 (AFTY…EIDP), 72–105 (SYIL…NPFL), and 120–153 (GEQA…TPGN).

The protein belongs to the Ycf3 family.

The protein localises to the plastid. It is found in the chloroplast thylakoid membrane. Essential for the assembly of the photosystem I (PSI) complex. May act as a chaperone-like factor to guide the assembly of the PSI subunits. This Triticum aestivum (Wheat) protein is Photosystem I assembly protein Ycf3.